Consider the following 309-residue polypeptide: Uracil phosphoribosyltransferase homolog (309 aa).

The tract at residues 1–41 is disordered; the sequence is MATELQCPDSMPCHNQQVNSASTPSPEQLRPGDPILDHAGG. Over residues 13–26 the composition is skewed to polar residues; sequence CHNQQVNSASTPSP. The residue at position 25 (serine 25) is a Phosphoserine. Residues arginine 133, arginine 142, and 176–179 each bind GTP; that span reads EKGN. Position 186 (arginine 186) interacts with 5-phospho-alpha-D-ribose 1-diphosphate. 2 residues coordinate GTP: arginine 203 and arginine 232. 238 to 246 is a 5-phospho-alpha-D-ribose 1-diphosphate binding site; that stretch reads YPILSTGNT. 299-301 is a uracil binding site; that stretch reads THF.

It belongs to the UPRTase family.

The protein localises to the cytoplasm. The protein resides in the nucleus. The sequence is that of Uracil phosphoribosyltransferase homolog (UPRT) from Macaca fascicularis (Crab-eating macaque).